Reading from the N-terminus, the 413-residue chain is Unsaturated 3S-rhamnoglycuronyl hydrolase (413 aa).

The signal sequence occupies residues 1 to 21 (MNHTKLKLSAVALTLALGLSA). Cys-22 carries N-palmitoyl cysteine lipidation. Cys-22 carries S-diacylglycerol cysteine lipidation. Asp-203 acts as the Proton donor in catalysis.

The protein belongs to the glycosyl hydrolase 105 family.

The protein localises to the cell membrane. In terms of biological role, glucuronyl hydrolase involved in ulvan degradation. Ulvan is the main polysaccharide component of the Ulvales (green seaweed) cell wall. It is composed of disaccharide building blocks comprising 3-sulfated rhamnose (Rha3S) linked to D-glucuronic acid (GlcA), L-iduronic acid (IduA), or D-xylose (Xyl). Unsaturated 3S-rhamnoglycuronyl hydrolase works together with ulvan lyases to fully degrade the ulvan polymer, catalyzing specifically the cleavage of the unsaturated 4-deoxy-L-threo-hex-4-enopyranosiduronic acid (deltaUA) of the deltaUA-oligosaccharides deltaUA-Rha3S, deltaUA-Rha3S-IduA-Rha3S and deltaUA-Rha3S-Xyl-Rha3S, the end products of the ulvan lyase reaction. This chain is Unsaturated 3S-rhamnoglycuronyl hydrolase, found in Alteromonas sp. (strain LOR).